The chain runs to 433 residues: CinA-like protein (433 aa).

It belongs to the CinA family.

The polypeptide is CinA-like protein (Prochlorococcus marinus subsp. pastoris (strain CCMP1986 / NIES-2087 / MED4)).